Reading from the N-terminus, the 1034-residue chain is FERM domain-containing protein 4B (1034 aa).

An FERM domain is found at 59–361; the sequence is RHCQVHLLDD…SQHQFYLDRK (303 aa). S372 is subject to Phosphoserine. 2 coiled-coil regions span residues 417-450 and 531-561; these read EVSE…ELKK and KKKR…RCGK. The necessary for adherens junction and tight junction localization stretch occupies residues 542–971; that stretch reads MKKLQEIENA…TQLTIGLSDY (430 aa). Low complexity predominate over residues 576 to 589; that stretch reads PSESSSLSDTTTYD. 4 disordered regions span residues 576–614, 635–698, 712–735, and 752–786; these read PSES…ILPP, DTRQ…LESQ, FSLS…YTSQ, and TTQT…AQKD. S608 is subject to Phosphoserine. 2 stretches are compositionally biased toward polar residues: residues 635–650 and 663–674; these read DTRQ…SSPY and MPTTPVLTRNAY. Low complexity predominate over residues 675–685; it reads SSSHLEPESSS. Residue S697 is modified to Phosphoserine. Low complexity predominate over residues 713-722; the sequence is SLSKSQRSSS. Polar residues predominate over residues 769 to 781; sequence QNVSTSNSGSMPN. Residue K882 forms a Glycyl lysine isopeptide (Lys-Gly) (interchain with G-Cter in SUMO2) linkage. Disordered regions lie at residues 905–925 and 1004–1034; these read RASG…SDRG and DGTD…GTLV. Residues 906 to 920 show a composition bias toward polar residues; that stretch reads ASGQKDQGHSPQTSF. Phosphoserine is present on S915. The segment covering 1018 to 1034 has biased composition (basic and acidic residues); sequence SEQRLFWHEDSKPGTLV. K1029 participates in a covalent cross-link: Glycyl lysine isopeptide (Lys-Gly) (interchain with G-Cter in SUMO2).

Interacts with CYTH3. Interacts with PARD3. Interacts with CYTH1.

Its subcellular location is the cytoplasm. It is found in the cytoskeleton. The protein localises to the cell junction. The protein resides in the tight junction. It localises to the adherens junction. Member of GRP1 signaling complexes that are acutely recruited to plasma membrane ruffles in response to insulin receptor signaling. May function as a scaffolding protein that regulates epithelial cell polarity by connecting ARF6 activation with the PAR3 complex. Plays a redundant role with FRMD4A in epithelial polarization. This Homo sapiens (Human) protein is FERM domain-containing protein 4B.